Here is a 191-residue protein sequence, read N- to C-terminus: Transcription factor HES-2 (191 aa).

Positions 1–26 are disordered; it reads MAPNVALADSMHNYQPKPGKRNQEAS. The 58-residue stretch at 28 to 85 folds into the bHLH domain; the sequence is LRKTLKPLMEKRRRARINESLNQLKTLILPLIGKDNSRYSKLEKADILEMTVRFLRDI. The Orange domain maps to 97 to 130; sequence YKEGYRACVERLSAILGKSHVLTGEASNRLLEYL. 2 stretches are compositionally biased toward polar residues: residues 159 to 173 and 182 to 191; these read RTSQ…QPSS and QLNSSIWRPW. Positions 159–191 are disordered; that stretch reads RTSQFGSPLQNQPSSHRPAPCPPQLNSSIWRPW. Positions 188–191 match the WRPW motif motif; sequence WRPW.

In terms of assembly, transcription repression requires formation of a complex with a corepressor protein of the Groucho/TLE family. Homodimer, and heterodimer with the other bHLH proteins neurod1, neurod4/ath3, hes1/hairy1 and hes6r. Weakly interacts with the bHLH protein hey1/hrt1. In terms of tissue distribution, expressed in the animal half of the early cleavage stage embryo. During neurulation and organogenesis, the otic vesicles and retina are the main sites of expression; expression in otic placodes begins as early as stage 13.5, persisting in the otic vesicles at stage 30 and beyond. Also transiently expressed in the olfactory placodes. In addition, weakly expressed in primary neurons. Expression in the retina begins at stage 21, and is seen throughout the neural retina by stage 30. From stage 35 onwards, expression progressively declines in the central retina, while remaining high in the margins. At stage 41, expression becomes restricted to the ciliary marginal zone (CMZ) of the retina, the only region where retinogenesis is still occurring.

The protein resides in the nucleus. Functionally, transcriptional repressor. Essential in the retina to govern glial versus neuronal differentiation. Promotes gliogenesis through the inhibition of neuronal differentiation by at least two distinct mechanisms; represses proneural gene transcription, and also physically interacts with proneural proteins, including neurod1. The polypeptide is Transcription factor HES-2 (hes2) (Xenopus laevis (African clawed frog)).